Here is a 259-residue protein sequence, read N- to C-terminus: Cobalt-precorrin-4 C(11)-methyltransferase (259 aa).

Belongs to the precorrin methyltransferase family.

It catalyses the reaction Co-precorrin-4 + S-adenosyl-L-methionine = Co-precorrin-5A + S-adenosyl-L-homocysteine + H(+). Its pathway is cofactor biosynthesis; adenosylcobalamin biosynthesis; cob(II)yrinate a,c-diamide from sirohydrochlorin (anaerobic route): step 4/10. Functionally, catalyzes the methylation of C-11 in cobalt-precorrin-4 to form cobalt-precorrin-5A. The sequence is that of Cobalt-precorrin-4 C(11)-methyltransferase (cbiF) from Methanocaldococcus jannaschii (strain ATCC 43067 / DSM 2661 / JAL-1 / JCM 10045 / NBRC 100440) (Methanococcus jannaschii).